Consider the following 335-residue polypeptide: Serpentine receptor class alpha-13 (335 aa).

The Extracellular portion of the chain corresponds to 1–25; the sequence is MAIISSVNRTCASESLLELYRSYKY. A helical transmembrane segment spans residues 26 to 46; sequence ILSTSFNIIIPIISLFFLVYA. The Cytoplasmic portion of the chain corresponds to 47 to 61; sequence IKQLCAQSIIQYSTR. Residues 62-82 traverse the membrane as a helical segment; the sequence is VLLITTILFAVCHQIAYFCFK. Residues 83–108 lie on the Extracellular side of the membrane; the sequence is ADLLYTMLFKLDQPCNLQHSSYDCRF. The chain crosses the membrane as a helical span at residues 109–129; it reads ITIATTTSNCGMALVQLAMSI. The Cytoplasmic segment spans residues 130 to 146; sequence DRVFALKFNRVYYKLKS. A helical transmembrane segment spans residues 147–167; sequence IPGITLALITLSISFSMFFIL. The Extracellular segment spans residues 168 to 192; sequence TIDDPLSGYVNHCGFYPTYSQDKFH. Residues 193–213 traverse the membrane as a helical segment; that stretch reads IFLDVTLYLAVFNFVFDIGLM. The Cytoplasmic segment spans residues 214-243; that stretch reads YYSYQEILWKRSYSFVNRFQSRISLKCTQA. Residues 244 to 264 form a helical membrane-spanning segment; that stretch reads IFIISICQCISNVLYSGLLSL. The Extracellular segment spans residues 265–278; it reads LMKLGRYMSSADYN. Residues 279–299 traverse the membrane as a helical segment; sequence LSLSLAYTTPYSCLILPILIC. Residues 300–335 lie on the Cytoplasmic side of the membrane; that stretch reads KVLEYIKKQRTVGILSLRNQKQSMEGHMAMINSAWK.

This sequence belongs to the nematode receptor-like protein sra family. In terms of tissue distribution, expressed in the AWA and AWC chemosensory neurons.

The protein resides in the membrane. Functionally, chemosensory receptor that negatively regulates RAS/MAPK signaling during vulva induction and the negative regulation of olfaction of volitile attractants. Required for the suppression of vulval induction in response to food starvation. Signaling acts through the GPA-5 G-alpha protein subunit. This is Serpentine receptor class alpha-13 (sra-13) from Caenorhabditis elegans.